Consider the following 87-residue polypeptide: Tektin-2 (87 aa).

Residues 26-55 (VEEELLKEVEVIEATKKALQQRVSQAFQQL) are a coiled coil.

It belongs to the tektin family. In terms of assembly, microtubule inner protein component of sperm flagellar doublet microtubules. May interact with CCDC172. Post-translationally, tyrosine phosphorylated. Ubiquitinated, leading to its degradation. Deubiquitinated by USP16, promoting its stability. Detected in sperm flagella (at protein level).

The protein localises to the cytoplasm. It is found in the cytoskeleton. Its subcellular location is the cilium axoneme. It localises to the flagellum axoneme. The protein resides in the microtubule organizing center. Functionally, microtubule inner protein (MIP) part of the dynein-decorated doublet microtubules (DMTs) in cilia and flagellar axoneme. Plays a key role in the assembly or attachment of the inner dynein arm to microtubules in sperm flagella and tracheal cilia. Forms filamentous polymers in the walls of ciliary and flagellar microtubules. In Mesocricetus auratus (Golden hamster), this protein is Tektin-2.